The primary structure comprises 408 residues: Aminoacylase-1 (408 aa).

H80 contributes to the Zn(2+) binding site. D82 is an active-site residue. D113 lines the Zn(2+) pocket. The Proton acceptor role is filled by E147. E148, E175, and H373 together coordinate Zn(2+).

Belongs to the peptidase M20A family. In terms of assembly, homodimer. Interacts with SPHK1. Zn(2+) is required as a cofactor. In terms of tissue distribution, expression is highest in kidney, strong in brain and weaker in placenta and spleen.

Its subcellular location is the cytoplasm. It catalyses the reaction an N-acyl-L-amino acid + H2O = an L-alpha-amino acid + a carboxylate. It carries out the reaction N-acetyl-L-methionine + H2O = L-methionine + acetate. The catalysed reaction is N-acetyl-L-glutamine + H2O = L-glutamine + acetate. Functionally, catalyzes the hydrolysis of N-acetylated amino acids to acetate and free amino acids. This is Aminoacylase-1 (ACY1) from Homo sapiens (Human).